The primary structure comprises 482 residues: tRNA sulfurtransferase (482 aa).

The THUMP domain occupies 61–165 (DQILAILMQT…YDHLHQVLHR (105 aa)). ATP-binding positions include 183 to 184 (LI), K265, G287, and Q296. C344 and C456 form a disulfide bridge. The Rhodanese domain maps to 404-482 (IGDGAIVLDI…GYGNIKVYRP (79 aa)). C456 acts as the Cysteine persulfide intermediate in catalysis.

It belongs to the ThiI family.

It is found in the cytoplasm. It carries out the reaction [ThiI sulfur-carrier protein]-S-sulfanyl-L-cysteine + a uridine in tRNA + 2 reduced [2Fe-2S]-[ferredoxin] + ATP + H(+) = [ThiI sulfur-carrier protein]-L-cysteine + a 4-thiouridine in tRNA + 2 oxidized [2Fe-2S]-[ferredoxin] + AMP + diphosphate. It catalyses the reaction [ThiS sulfur-carrier protein]-C-terminal Gly-Gly-AMP + S-sulfanyl-L-cysteinyl-[cysteine desulfurase] + AH2 = [ThiS sulfur-carrier protein]-C-terminal-Gly-aminoethanethioate + L-cysteinyl-[cysteine desulfurase] + A + AMP + 2 H(+). Its pathway is cofactor biosynthesis; thiamine diphosphate biosynthesis. Catalyzes the ATP-dependent transfer of a sulfur to tRNA to produce 4-thiouridine in position 8 of tRNAs, which functions as a near-UV photosensor. Also catalyzes the transfer of sulfur to the sulfur carrier protein ThiS, forming ThiS-thiocarboxylate. This is a step in the synthesis of thiazole, in the thiamine biosynthesis pathway. The sulfur is donated as persulfide by IscS. The protein is tRNA sulfurtransferase of Photobacterium profundum (strain SS9).